The primary structure comprises 319 residues: MVPGDASSVVSVNPAKPLISVCIPMYNNGATIERCLRSILEQEGVEFEIVVVDDDSSDDCAAIAATMLRPGDRLLRNEPRLGLNRNHNKCLEVARGGLIQFVHGDDRLLPGALQTLSRRFEDPSVGMAFAPRRVESDDIKWQQRYGRVHTRFRKLRDRNHGPSLVLQMVLHGAKENWIGEPTAVMFRRQLALDAGGFRTDIYQLVDVDFWLRLMLRSAVCFVPHELSVRRHTAATETTRVMATRRNVLDRQRILTWLIVDPLSPNSVRSAAALWWIPAWLAMIVEVAVLGPQRRTHLKALAPAPFREFAHARRQLPMAD.

A helical transmembrane segment spans residues 270 to 290 (AAALWWIPAWLAMIVEVAVLG).

The protein resides in the membrane. This is an uncharacterized protein from Mycobacterium tuberculosis (strain CDC 1551 / Oshkosh).